The primary structure comprises 250 residues: 6-phosphogluconate dehydrogenase, decarboxylating (250 aa).

2 residues coordinate substrate: Lys-29 and Arg-56. Residue Lys-77 is modified to N6-acetyllysine. Substrate is bound by residues Arg-214 and His-220. 245-248 contributes to the NADP(+) binding site; that stretch reads SSSY.

It belongs to the 6-phosphogluconate dehydrogenase family. In terms of assembly, homodimer.

Its subcellular location is the cytoplasm. It catalyses the reaction 6-phospho-D-gluconate + NADP(+) = D-ribulose 5-phosphate + CO2 + NADPH. The protein operates within carbohydrate degradation; pentose phosphate pathway; D-ribulose 5-phosphate from D-glucose 6-phosphate (oxidative stage): step 3/3. In terms of biological role, catalyzes the oxidative decarboxylation of 6-phosphogluconate to ribulose 5-phosphate and CO(2), with concomitant reduction of NADP to NADPH. The polypeptide is 6-phosphogluconate dehydrogenase, decarboxylating (PGD) (Sus scrofa (Pig)).